A 650-amino-acid polypeptide reads, in one-letter code: Threonine--tRNA ligase (650 aa).

The region spanning 3 to 65 (DLVKVTLPDG…DRDARLEIVT (63 aa)) is the TGS domain. The tract at residues 248–548 (DHRRLGPQLG…LTEHYAGAFP (301 aa)) is catalytic. The Zn(2+) site is built by C349, H400, and H525.

It belongs to the class-II aminoacyl-tRNA synthetase family. In terms of assembly, homodimer. The cofactor is Zn(2+).

Its subcellular location is the cytoplasm. The catalysed reaction is tRNA(Thr) + L-threonine + ATP = L-threonyl-tRNA(Thr) + AMP + diphosphate + H(+). In terms of biological role, catalyzes the attachment of threonine to tRNA(Thr) in a two-step reaction: L-threonine is first activated by ATP to form Thr-AMP and then transferred to the acceptor end of tRNA(Thr). Also edits incorrectly charged L-seryl-tRNA(Thr). This is Threonine--tRNA ligase from Anaeromyxobacter dehalogenans (strain 2CP-C).